The following is a 183-amino-acid chain: Negative modulator of initiation of replication (183 aa).

An interaction with DNA region spans residues 90–91 (AV).

This sequence belongs to the SeqA family. As to quaternary structure, homodimer. Polymerizes to form helical filaments.

Its subcellular location is the cytoplasm. Negative regulator of replication initiation, which contributes to regulation of DNA replication and ensures that replication initiation occurs exactly once per chromosome per cell cycle. Binds to pairs of hemimethylated GATC sequences in the oriC region, thus preventing assembly of replication proteins and re-initiation at newly replicated origins. Repression is relieved when the region becomes fully methylated. The polypeptide is Negative modulator of initiation of replication (Shewanella oneidensis (strain ATCC 700550 / JCM 31522 / CIP 106686 / LMG 19005 / NCIMB 14063 / MR-1)).